A 570-amino-acid chain; its full sequence is Ferroportin (570 aa).

At 1-23 (MTKARDQTHQEGCCGSLANYLTS) the chain is on the cytoplasmic side. A helical transmembrane segment spans residues 24 to 53 (AKFLLYLGHSLSTWGDRMWHFAVSVFLVEL). The Fe cation site is built by aspartate 39 and histidine 43. Residues 54-57 (YGNS) are Extracellular-facing. A helical membrane pass occupies residues 58-84 (LLLTAVYGLVVAGSVLVLGAIIGDWVD). The Cytoplasmic segment spans residues 85 to 87 (KNA). A helical transmembrane segment spans residues 88 to 118 (RLKVAQTSLVVQNVSVILCGIILMMVFLHKN). Topologically, residues 119–126 (ELLTMYHG) are extracellular. The helical transmembrane segment at 127–162 (WVLTVCYILIITIANIANLASTATAITIQRDWIVVV) threads the bilayer. Topologically, residues 163 to 164 (AG) are cytoplasmic. A helical membrane pass occupies residues 165 to 195 (ENRSRLADMNATIRRIDQLTNILAPMAVGQI). The Extracellular segment spans residues 196–202 (MTFGSPV). A helical transmembrane segment spans residues 203–229 (IGCGFISGWNLVSMCVEYFLLWKVYQK). Topologically, residues 230-306 (TPALAVKAAL…DGWVSYYNQP (77 aa)) are cytoplasmic. Residues 307-333 (VFLAGMGLAFLYMTVLGFDCITTGYAY) traverse the membrane as a helical segment. Cysteine 326 provides a ligand contact to Fe cation. At 334-338 (TQGLS) the chain is on the extracellular side. A helical transmembrane segment spans residues 339–366 (GSILSILMGASAITGIMGTVAFTWLRRK). The Cytoplasmic segment spans residues 367 to 368 (CG). The helical transmembrane segment at 369–391 (LVRTGLFSGLAQLSCLILCVISV) threads the bilayer. Over 392–452 (FMPGSPLDLS…EMSTKPIPIV (61 aa)) the chain is Extracellular. Asparagine 437 carries an N-linked (GlcNAc...) asparagine glycan. The chain crosses the membrane as a helical span at residues 453 to 482 (SVSLLFAGVIAARIGLWSFDLTVTQLLQEN). Over 483 to 487 (VIESE) the chain is Cytoplasmic. Residues 488 to 512 (RGIINGVQNSMNYLLDLLHFIMVIL) form a helical membrane-spanning segment. A Fe cation-binding site is contributed by histidine 506. Over 513–515 (APN) the chain is Extracellular. A helical membrane pass occupies residues 516 to 541 (PEAFGLLVLISVSFVAMGHLMYFRFA). Over 542–570 (QKTLGNQIFVCGPDEKEVTDENQPNTSVV) the chain is Cytoplasmic.

This sequence belongs to the ferroportin (FP) (TC 2.A.100) family. SLC40A subfamily. Identified in a complex with STOM. Interacts with HAMP; affinity of the peptide hormone HAMP for SLC40A1 increases by 80-fold in the presence of iron and the interaction promotes SLC40A1 ubiquitination and degradation. Part of a complex composed of SLC40A1/ferroportin, TF/transferrin and HEPH/hephaestin that transfers iron from cells to transferrin. Post-translationally, polyubiquitinated by RNF217; leading to proteasomal degradation. Under conditions of high systemic iron levels, both the hormone peptide hepcidin/HAMP and holo(iron bound)-transferrin/TF induce the ubiquitination, internalization and proteasomal degradation of SLC40A1 to control iron release from cells. As to expression, high expression in spleen, liver, kidney, heart and duodenum.

Its subcellular location is the cell membrane. It is found in the basolateral cell membrane. It catalyses the reaction Fe(2+)(in) = Fe(2+)(out). Its function is as follows. Transports Fe(2+) from the inside of a cell to the outside of the cell, playing a key role for maintaining systemic iron homeostasis. Transports iron from intestinal, splenic, hepatic cells, macrophages and erythrocytes into the blood to provide iron to other tissues. Controls therefore dietary iron uptake, iron recycling by macrophages and erythrocytes, and release of iron stores in hepatocytes. When iron is in excess in serum, circulating HAMP/hepcidin levels increase resulting in a degradation of SLC40A1, thus limiting the iron efflux to plasma. This chain is Ferroportin, found in Mus musculus (Mouse).